Consider the following 753-residue polypeptide: 5-methyltetrahydropteroyltriglutamate--homocysteine methyltransferase (753 aa).

Residues 17–20 (RELK) and K117 contribute to the 5-methyltetrahydropteroyltri-L-glutamate site. L-homocysteine-binding positions include 431 to 433 (IGS) and E484. L-methionine-binding positions include 431–433 (IGS) and E484. Residues 515-516 (RC) and W561 contribute to the 5-methyltetrahydropteroyltri-L-glutamate site. D599 is an L-homocysteine binding site. An L-methionine-binding site is contributed by D599. 5-methyltetrahydropteroyltri-L-glutamate is bound at residue E605. The Zn(2+) site is built by H641, C643, and E665. The active-site Proton donor is H694. Residue C726 participates in Zn(2+) binding.

Belongs to the vitamin-B12 independent methionine synthase family. It depends on Zn(2+) as a cofactor.

The enzyme catalyses 5-methyltetrahydropteroyltri-L-glutamate + L-homocysteine = tetrahydropteroyltri-L-glutamate + L-methionine. It functions in the pathway amino-acid biosynthesis; L-methionine biosynthesis via de novo pathway; L-methionine from L-homocysteine (MetE route): step 1/1. Catalyzes the transfer of a methyl group from 5-methyltetrahydrofolate to homocysteine resulting in methionine formation. This Escherichia coli O8 (strain IAI1) protein is 5-methyltetrahydropteroyltriglutamate--homocysteine methyltransferase.